A 414-amino-acid polypeptide reads, in one-letter code: MGGNHSHKPPVFDENEEVNFDHFQILRAIGKGSFGKVCIVQKRDTKKMYAMKYMNKQKCIERDEVRNVFRELQIMQGLEHPFLVNLWYSFQDEEDMFMVVDLLLGGDLRYHLQQNVHFTEGTVKLYICELALALEYLQRYHIIHRDIKPDNILLDEHGHVHITDFNIATVVKGAERASSMAGTKPYMAPEVFQVYMDRGPGYSYPVDWWSLGITAYELLRGWRPYEIHSVTPIDEILNMFKVERVHYSSTWCKGMVALLRKLLTKDPESRVSSLHDIQSVPYLADMNWDAVFKKALMPGFVPNKGRLNCDPTFELEEMILESKPLHKKKKRLAKNRSRDGTKDSCPLNGHLQHCLETVREEFIIFNREKLRRQQGQGSQLLDTDSRGGGQAQSKLQDGCNNNLLTHTCTRGCSS.

The region spanning 23–283 (FQILRAIGKG…LHDIQSVPYL (261 aa)) is the Protein kinase domain. Residues 29-37 (IGKGSFGKV) and K52 contribute to the ATP site. D146 serves as the catalytic Proton acceptor. A disordered region spans residues 374–396 (QGQGSQLLDTDSRGGGQAQSKLQ).

The protein belongs to the protein kinase superfamily. Ser/Thr protein kinase family. Requires Mg(2+) as cofactor.

The catalysed reaction is L-seryl-[protein] + ATP = O-phospho-L-seryl-[protein] + ADP + H(+). It catalyses the reaction L-threonyl-[protein] + ATP = O-phospho-L-threonyl-[protein] + ADP + H(+). The chain is Serine/threonine-protein kinase 32B from Homo sapiens (Human).